Here is a 367-residue protein sequence, read N- to C-terminus: tRNA pseudouridine synthase D (367 aa).

The Nucleophile role is filled by Asp78. One can recognise a TRUD domain in the interval Gly153–Thr300.

This sequence belongs to the pseudouridine synthase TruD family.

It catalyses the reaction uridine(13) in tRNA = pseudouridine(13) in tRNA. Responsible for synthesis of pseudouridine from uracil-13 in transfer RNAs. The polypeptide is tRNA pseudouridine synthase D (Colwellia psychrerythraea (strain 34H / ATCC BAA-681) (Vibrio psychroerythus)).